Reading from the N-terminus, the 270-residue chain is UPF0162 protein PA3419 (270 aa).

Belongs to the UPF0162 family.

This is UPF0162 protein PA3419 from Pseudomonas aeruginosa (strain ATCC 15692 / DSM 22644 / CIP 104116 / JCM 14847 / LMG 12228 / 1C / PRS 101 / PAO1).